The following is a 64-amino-acid chain: MRLHHLLLALLFLVLSAGSGFTQGVRNSQSCRRNKGICVPIRCPGSMRQIGTCLGAQVKCCRRK.

A signal peptide spans 1-24; it reads MRLHHLLLALLFLVLSAGSGFTQG. Disulfide bonds link Cys-31/Cys-60, Cys-38/Cys-53, and Cys-43/Cys-61.

The protein belongs to the beta-defensin family. LAP/TAP subfamily. In many of the exposed epithelial surfaces including conjunctivae, bronchi, colon, urinary tract and trachea.

It is found in the secreted. Functionally, shows a broad spectrum of antibacterial and antifungal activities. The sequence is that of Lingual antimicrobial peptide (LAP) from Bos taurus (Bovine).